A 372-amino-acid polypeptide reads, in one-letter code: uncharacterized protein (372 aa).

Residues F49 to E72 form a disordered region. The segment covering G55–S70 has biased composition (gly residues).

This is an uncharacterized protein from Halorubrum lacusprofundi (strain ATCC 49239 / DSM 5036 / JCM 8891 / ACAM 34).